The primary structure comprises 109 residues: MKVATALSVLAVAGSALASALPSAANSEKRQSDCIGPLLCCGSLTTPLDPLVDPILELVGIDAAAIVGSVGLLCHAYDDTCTSEPQCCTEANLLGGTLGLGCGPLEHGH.

The N-terminal stretch at 1 to 20 (MKVATALSVLAVAGSALASA) is a signal peptide. Intrachain disulfides connect Cys-34-Cys-87, Cys-40-Cys-81, Cys-41-Cys-74, and Cys-88-Cys-102.

Belongs to the fungal hydrophobin family. As to quaternary structure, self-assembles to form functional amyloid fibrils called rodlets. Self-assembly into fibrillar rodlets occurs spontaneously at hydrophobic:hydrophilic interfaces and the rodlets further associate laterally to form amphipathic monolayers.

It localises to the secreted. The protein resides in the spore wall. In terms of biological role, aerial growth, conidiation, and dispersal of filamentous fungi in the environment rely upon a capability of their secreting small amphipathic proteins called hydrophobins (HPBs) with low sequence identity. Class I can self-assemble into an outermost layer of rodlet bundles on aerial cell surfaces, conferring cellular hydrophobicity that supports fungal growth, development and dispersal; whereas Class II form highly ordered films at water-air interfaces through intermolecular interactions but contribute nothing to the rodlet structure. DewE is a class I hydrophobin that contributes to the hydrophobicity of the spore surface. The protein is Class I hydrophobin dewE of Emericella nidulans (strain FGSC A4 / ATCC 38163 / CBS 112.46 / NRRL 194 / M139) (Aspergillus nidulans).